A 324-amino-acid chain; its full sequence is Biotin synthase 1 (324 aa).

The Radical SAM core domain occupies 37 to 256 (NAIETASLLS…VALARILMPA (220 aa)). Residues cysteine 52, cysteine 56, and cysteine 59 each coordinate [4Fe-4S] cluster. [2Fe-2S] cluster contacts are provided by cysteine 96, cysteine 127, cysteine 187, and arginine 260.

This sequence belongs to the radical SAM superfamily. Biotin synthase family. As to quaternary structure, homodimer. [4Fe-4S] cluster serves as cofactor. The cofactor is [2Fe-2S] cluster.

The catalysed reaction is (4R,5S)-dethiobiotin + (sulfur carrier)-SH + 2 reduced [2Fe-2S]-[ferredoxin] + 2 S-adenosyl-L-methionine = (sulfur carrier)-H + biotin + 2 5'-deoxyadenosine + 2 L-methionine + 2 oxidized [2Fe-2S]-[ferredoxin]. Its pathway is cofactor biosynthesis; biotin biosynthesis; biotin from 7,8-diaminononanoate: step 2/2. Its function is as follows. Catalyzes the conversion of dethiobiotin (DTB) to biotin by the insertion of a sulfur atom into dethiobiotin via a radical-based mechanism. This is Biotin synthase 1 from Paracoccus denitrificans (strain Pd 1222).